Consider the following 890-residue polypeptide: Phosphatidate phosphatase LPIN1 (890 aa).

The tract at residues 1 to 108 (MNYVGQLAGQ…IPMHLATSPI (108 aa)) is N-LIP. Phosphoserine is present on residues S106 and S150. Disordered regions lie at residues 125-183 (VDRM…DMFP), 228-300 (SYPN…SSRK), 365-392 (KPPSASVVQTANKTDSPSRKRDKRSRHL), and 421-456 (SGLAKHASDNGARSANQSPQSVGSSGVDSGVESTSD). Residues 152–161 (VKKRRKRRRK) are compositionally biased toward basic residues. Positions 153–158 (KKRRKR) match the Nuclear localization signal motif. 2 stretches are compositionally biased toward basic and acidic residues: residues 162 to 172 (SQLDSLKRDDN) and 252 to 265 (SDSELVSKSTERTG). Residues S252, S254, and S260 each carry the phosphoserine modification. T264 carries the post-translational modification Phosphothreonine. Position 294 is a phosphoserine (S294). At K425 the chain carries N6-acetyllysine. The segment covering 431–440 (GARSANQSPQ) has biased composition (polar residues). Phosphoserine is present on residues S434, S438, and S449. Low complexity predominate over residues 441–456 (SVGSSGVDSGVESTSD). Residue K565 forms a Glycyl lysine isopeptide (Lys-Gly) (interchain with G-Cter in SUMO) linkage. Positions 566–616 (EESKPEQCLAGKAHSTGEQPPQLSLATRVKHESSSSDEERAAAKPSNAGHL) are disordered. Residues 581-590 (TGEQPPQLSL) are compositionally biased toward polar residues. The span at 594-607 (VKHESSSSDEERAA) shows a compositional bias: basic and acidic residues. K595 is modified (N6-acetyllysine). K595 is covalently cross-linked (Glycyl lysine isopeptide (Lys-Gly) (interchain with G-Cter in SUMO)). Residues S600 and S601 each carry the phosphoserine modification. The tract at residues 624-830 (YKKTLRLTSE…VNPKGELVQE (207 aa)) is C-LIP. A DXDXT motif motif is present at residues 678–682 (DIDGT). The short motif at 689–693 (LGHIL) is the LXXIL motif element. 2 positions are modified to phosphoserine: S887 and S889.

This sequence belongs to the lipin family. Interacts (via LXXIL motif) with PPARA. Interacts with PPARGC1A. Interaction with PPARA and PPARGC1A leads to the formation of a complex that modulates gene transcription. Interacts with MEF2C. Requires Mg(2+) as cofactor. The cofactor is Mn(2+). Post-translationally, phosphorylated at multiple sites by mTOR in response to insulin, leading to its inactivation. Phosphorylation does not affect the catalytic activity but regulates the localization. Phosphorylation is decreased by epinephrine. Dephosphorylated by the CTDNEP1-CNEP1R1 complex. Dephosphorylation following mTOR inhibition promotes its activity. In terms of processing, acetylation at Lys-425 and Lys-595 by KAT5 in response to fatty acids promotes translocation to the endoplasmic reticulum and synthesis of diacylglycerol. Sumoylated. Specifically expressed in skeletal muscle. Also abundant in adipose tissue. Lower levels in some portions of the digestive tract.

The protein resides in the cytoplasm. The protein localises to the cytosol. Its subcellular location is the endoplasmic reticulum membrane. It localises to the nucleus membrane. It catalyses the reaction a 1,2-diacyl-sn-glycero-3-phosphate + H2O = a 1,2-diacyl-sn-glycerol + phosphate. The enzyme catalyses 1-octadecanoyl-2-(4Z,7Z,10Z,13Z,16Z,19Z-docosahexaenoyl)-sn-glycero-3-phosphate + H2O = 1-octadecanoyl-2-(4Z,7Z,10Z,13Z,16Z,19Z-docosahexaenoyl)-sn-glycerol + phosphate. It carries out the reaction 1-octadecanoyl-2-(5Z,8Z,11Z,14Z-eicosatetraenoyl)-sn-glycero-3-phosphate + H2O = 1-octadecanoyl-2-(5Z,8Z,11Z,14Z-eicosatetraenoyl)-sn-glycerol + phosphate. The catalysed reaction is 1-octadecanoyl-2-(9Z,12Z-octadecadienoyl)-sn-glycero-3-phosphate + H2O = 1-octadecanoyl-2-(9Z,12Z)-octadecadienoyl-sn-glycerol + phosphate. It catalyses the reaction 1-octadecanoyl-2-(9Z-octadecenoyl)-sn-glycero-3-phosphate + H2O = 1-octadecanoyl-2-(9Z-octadecenoyl)-sn-glycerol + phosphate. The enzyme catalyses 1-hexadecanoyl-2-(4Z,7Z,10Z,13Z,16Z,19Z-docosahexaenoyl)-sn-glycero-3-phosphate + H2O = 1-hexadecanoyl-2-(4Z,7Z,10Z,13Z,16Z,19Z-docosahexaenoyl)-sn-glycerol + phosphate. It carries out the reaction 1,2-dioctadecanoyl-sn-glycero-3-phosphate + H2O = 1,2-dioctadecanoyl-sn-glycerol + phosphate. The catalysed reaction is 1-hexadecanoyl-2-(5Z,8Z,11Z,14Z-eicosatetraenoyl)-sn-glycero-3-phosphate + H2O = 1-hexadecanoyl-2-(5Z,8Z,11Z,14Z-eicosatetraenoyl)-sn-glycerol + phosphate. It catalyses the reaction 1-hexadecanoyl-2-(9Z,12Z-octadecadienoyl)-sn-glycero-3-phosphate + H2O = 1-hexadecanoyl-2-(9Z,12Z-octadecadienoyl)-sn-glycerol + phosphate. The enzyme catalyses 1-hexadecanoyl-2-(9Z-octadecenoyl)-sn-glycero-3-phosphate + H2O = 1-hexadecanoyl-2-(9Z-octadecenoyl)-sn-glycerol + phosphate. It carries out the reaction 1,2-di-(4Z,7Z,10Z,13Z,16Z,19Z-docosahexaenoyl)-sn-glycero-3-phosphate + H2O = 1,2-di-(4Z,7Z,10Z,13Z,16Z,19Z-docosahexaenoyl)-sn-glycerol + phosphate. The catalysed reaction is 1,2-di-(5Z,8Z,11Z,14Z)-eicosatetraenoyl-sn-glycero-3-phosphate + H2O = 1,2-di-(5Z,8Z,11Z,14Z)-eicosatetraenoyl-sn-glycerol + phosphate. It catalyses the reaction 1,2-di-(9Z,12Z-octadecadienoyl)-sn-glycero-3-phosphate + H2O = 1,2-di-(9Z,12Z-octadecadienoyl)-sn-glycerol + phosphate. The enzyme catalyses 1,2-di-(9Z-octadecenoyl)-sn-glycero-3-phosphate + H2O = 1,2-di-(9Z-octadecenoyl)-sn-glycerol + phosphate. It carries out the reaction 1,2-dihexadecanoyl-sn-glycero-3-phosphate + H2O = 1,2-dihexadecanoyl-sn-glycerol + phosphate. Potently inhibited by sphingolipids, in particular, the sphingoid bases sphinganine and sphingosine and ceramide-1-phosphate. Inhibited by concentrations of Mg(2+) and Mn(2+) above their optimums and by Ca(2+), Zn(2+), N-ethylmaleimide and propranolol. Its activity is regulated as follows. Sertraline and propanolol inhibit activity in dose-dependent manners with IC(50) values of 103 uM and 226 uM, respectively. With respect to regulation, sertraline and propanolol inhibit activity in dose-dependent manners with IC(50) values of 108 uM and 271 uM, respectively. Sertraline and propanolol inhibit activity in dose-dependent manners with IC(50) values of 143 uM and 227 uM, respectively. In terms of biological role, acts as a magnesium-dependent phosphatidate phosphatase enzyme which catalyzes the conversion of phosphatidic acid to diacylglycerol during triglyceride, phosphatidylcholine and phosphatidylethanolamine biosynthesis and therefore controls the metabolism of fatty acids at different levels. Is involved in adipocyte differentiation. Recruited at the mitochondrion outer membrane and is involved in mitochondrial fission by converting phosphatidic acid to diacylglycerol. Acts also as nuclear transcriptional coactivator for PPARGC1A/PPARA regulatory pathway to modulate lipid metabolism gene expression. The protein is Phosphatidate phosphatase LPIN1 of Homo sapiens (Human).